Here is a 360-residue protein sequence, read N- to C-terminus: LETM1 domain-containing protein 1 (360 aa).

The interval 1-110 (MALSRVCWAR…KKARRIKTNM (110 aa)) is required and sufficient for mitochondrial import. Residues 1 to 137 (MALSRVCWAR…LRQFRQDVTK (137 aa)) lie on the Cytoplasmic side of the membrane. A helical transmembrane segment spans residues 138-158 (CLFLGIISIPPFANYLVFLLM). The Mitochondrial intermembrane portion of the chain corresponds to 159–360 (YLFPRQLLIR…LSTNYLGTRR (202 aa)). In terms of domain architecture, Letm1 RBD spans 186–360 (FRKQSHPEII…LSTNYLGTRR (175 aa)).

As to quaternary structure, interacts with BRI3BP. Interacts (via C-terminal) with SMARCA4; the interaction regulates transcriptional expression of thermogenic genes in brown adipose tissue. Kidney, liver, skeletal muscle, heart and brain. Overexpressed in various tumors including leukemia, lymphoma, and carcinomas of the breast, kidney, ovary, stomach, colon and uterine cervix.

It localises to the mitochondrion outer membrane. The protein resides in the nucleus. It is found in the mitochondrion inner membrane. Its function is as follows. Plays an essential role for mitochondrial structure and function, as well as thermogenesis of brown adipocytes. In brown adipose tissue also localizes in the nucleus where it interacts with the chromatin remodeler SMARCA4 to regulate thermogenic genes expression, such as UCP1. May regulate phagocytosis and inflammatory responses to lipopolysaccharide in macrophages. Involved in tumorigenesis and may function as a negative regulator of the p53/TP53. The chain is LETM1 domain-containing protein 1 from Homo sapiens (Human).